Consider the following 86-residue polypeptide: Cell division topological specificity factor (86 aa).

The protein belongs to the MinE family.

Prevents the cell division inhibition by proteins MinC and MinD at internal division sites while permitting inhibition at polar sites. This ensures cell division at the proper site by restricting the formation of a division septum at the midpoint of the long axis of the cell. In Allorhizobium ampelinum (strain ATCC BAA-846 / DSM 112012 / S4) (Agrobacterium vitis (strain S4)), this protein is Cell division topological specificity factor.